A 343-amino-acid chain; its full sequence is RNA 3'-terminal phosphate cyclase (343 aa).

Residues Gln-102 and 284 to 288 (FLGDQ) contribute to the ATP site. His-308 acts as the Tele-AMP-histidine intermediate in catalysis.

It belongs to the RNA 3'-terminal cyclase family. Type 1 subfamily.

It localises to the cytoplasm. The catalysed reaction is a 3'-end 3'-phospho-ribonucleotide-RNA + ATP = a 3'-end 2',3'-cyclophospho-ribonucleotide-RNA + AMP + diphosphate. Catalyzes the conversion of 3'-phosphate to a 2',3'-cyclic phosphodiester at the end of RNA. The mechanism of action of the enzyme occurs in 3 steps: (A) adenylation of the enzyme by ATP; (B) transfer of adenylate to an RNA-N3'P to produce RNA-N3'PP5'A; (C) and attack of the adjacent 2'-hydroxyl on the 3'-phosphorus in the diester linkage to produce the cyclic end product. The biological role of this enzyme is unknown but it is likely to function in some aspects of cellular RNA processing. In Thermococcus kodakarensis (strain ATCC BAA-918 / JCM 12380 / KOD1) (Pyrococcus kodakaraensis (strain KOD1)), this protein is RNA 3'-terminal phosphate cyclase (rtcA).